The sequence spans 348 residues: NADH-ubiquinone oxidoreductase chain 2 (348 aa).

9 helical membrane passes run 13-33 (VITG…WAGL), 60-80 (FLAQ…NNLL), 96-116 (PLAM…HFWV), 124-144 (PLTS…SIMY), 150-170 (INTH…SWGG), 200-220 (TITT…FLTL), 241-261 (LMPL…LTGF), 278-298 (IIPT…MRLI), and 325-345 (LFIP…PLIL).

The protein belongs to the complex I subunit 2 family. As to quaternary structure, core subunit of respiratory chain NADH dehydrogenase (Complex I) which is composed of 45 different subunits. Interacts with TMEM242.

The protein resides in the mitochondrion inner membrane. It catalyses the reaction a ubiquinone + NADH + 5 H(+)(in) = a ubiquinol + NAD(+) + 4 H(+)(out). Functionally, core subunit of the mitochondrial membrane respiratory chain NADH dehydrogenase (Complex I) which catalyzes electron transfer from NADH through the respiratory chain, using ubiquinone as an electron acceptor. Essential for the catalytic activity and assembly of complex I. This Papio hamadryas (Hamadryas baboon) protein is NADH-ubiquinone oxidoreductase chain 2.